The primary structure comprises 235 residues: 2-C-methyl-D-erythritol 4-phosphate cytidylyltransferase (235 aa).

Belongs to the IspD/TarI cytidylyltransferase family. IspD subfamily.

The enzyme catalyses 2-C-methyl-D-erythritol 4-phosphate + CTP + H(+) = 4-CDP-2-C-methyl-D-erythritol + diphosphate. It functions in the pathway isoprenoid biosynthesis; isopentenyl diphosphate biosynthesis via DXP pathway; isopentenyl diphosphate from 1-deoxy-D-xylulose 5-phosphate: step 2/6. In terms of biological role, catalyzes the formation of 4-diphosphocytidyl-2-C-methyl-D-erythritol from CTP and 2-C-methyl-D-erythritol 4-phosphate (MEP). The protein is 2-C-methyl-D-erythritol 4-phosphate cytidylyltransferase of Pseudomonas putida (strain GB-1).